Here is a 488-residue protein sequence, read N- to C-terminus: Cobyric acid synthase (488 aa).

The 191-residue stretch at 252–442 folds into the GATase cobBQ-type domain; that stretch reads RTRICVPILP…VHGLFASDAF (191 aa). The active-site Nucleophile is Cys-334. His-434 is an active-site residue.

The protein belongs to the CobB/CobQ family. CobQ subfamily.

The protein operates within cofactor biosynthesis; adenosylcobalamin biosynthesis. Its function is as follows. Catalyzes amidations at positions B, D, E, and G on adenosylcobyrinic A,C-diamide. NH(2) groups are provided by glutamine, and one molecule of ATP is hydrogenolyzed for each amidation. This chain is Cobyric acid synthase, found in Xanthobacter autotrophicus (strain ATCC BAA-1158 / Py2).